Consider the following 461-residue polypeptide: V-type ATP synthase beta chain (461 aa).

This sequence belongs to the ATPase alpha/beta chains family.

Its function is as follows. Produces ATP from ADP in the presence of a proton gradient across the membrane. The V-type beta chain is a regulatory subunit. This is V-type ATP synthase beta chain from Clostridium botulinum (strain ATCC 19397 / Type A).